The chain runs to 506 residues: Ribose import ATP-binding protein RbsA 2 (506 aa).

ABC transporter domains follow at residues 5–241 and 251–498; these read LRLS…VGRR and VRAA…TAGT. 37–44 is an ATP binding site; that stretch reads GENGAGKS.

The protein belongs to the ABC transporter superfamily. Ribose importer (TC 3.A.1.2.1) family. The complex is composed of an ATP-binding protein (RbsA), two transmembrane proteins (RbsC) and a solute-binding protein (RbsB).

Its subcellular location is the cell inner membrane. The catalysed reaction is D-ribose(out) + ATP + H2O = D-ribose(in) + ADP + phosphate + H(+). Functionally, part of the ABC transporter complex RbsABC involved in ribose import. Responsible for energy coupling to the transport system. The sequence is that of Ribose import ATP-binding protein RbsA 2 from Burkholderia ambifaria (strain ATCC BAA-244 / DSM 16087 / CCUG 44356 / LMG 19182 / AMMD) (Burkholderia cepacia (strain AMMD)).